We begin with the raw amino-acid sequence, 149 residues long: Heavy metal-associated isoprenylated plant protein 21 (149 aa).

Residues 25 to 88 enclose the HMA domain; it reads LQTVDIKVKM…RVKSTGKKAE (64 aa). C36 and C39 together coordinate a metal cation. C146 is modified (cysteine methyl ester). C146 carries the S-farnesyl cysteine lipid modification. The propeptide at 147–149 is removed in mature form; it reads SIM.

Belongs to the HIPP family. As to quaternary structure, interacts with ZHD11/HB29. Expressed at low levels in leaves and sepals.

Its subcellular location is the membrane. Functionally, heavy-metal-binding protein. Binds cadmium. May be involved in cadmium transport and play a role in cadmium detoxification. The protein is Heavy metal-associated isoprenylated plant protein 21 of Arabidopsis thaliana (Mouse-ear cress).